The primary structure comprises 255 residues: tRNA (guanine-N(7)-)-methyltransferase (255 aa).

A disordered region spans residues Met-1–Asn-30. Over residues Ala-17–Asp-27 the composition is skewed to acidic residues. Glu-86, Glu-111, Asp-138, and Asp-161 together coordinate S-adenosyl-L-methionine. Asp-161 is a catalytic residue. Residues Lys-165, Asp-197, and Thr-232–Glu-235 each bind substrate.

Belongs to the class I-like SAM-binding methyltransferase superfamily. TrmB family.

It carries out the reaction guanosine(46) in tRNA + S-adenosyl-L-methionine = N(7)-methylguanosine(46) in tRNA + S-adenosyl-L-homocysteine. The protein operates within tRNA modification; N(7)-methylguanine-tRNA biosynthesis. Its function is as follows. Catalyzes the formation of N(7)-methylguanine at position 46 (m7G46) in tRNA. The polypeptide is tRNA (guanine-N(7)-)-methyltransferase (Burkholderia vietnamiensis (strain G4 / LMG 22486) (Burkholderia cepacia (strain R1808))).